The sequence spans 220 residues: Uracil phosphoribosyltransferase 2 (220 aa).

77-80 (ARDI) contacts GTP. Positions 87 and 113 each coordinate 5-phospho-alpha-D-ribose 1-diphosphate. Position 134 (arginine 134) interacts with GTP. Residues aspartate 140 and 140-148 (DPLLATGNS) contribute to the 5-phospho-alpha-D-ribose 1-diphosphate site. Position 204 (tyrosine 204) interacts with D-ribose 5-phosphate. Uracil is bound by residues valine 205 and 210-212 (GDF). Aspartate 211 is a 5-phospho-alpha-D-ribose 1-diphosphate binding site.

Belongs to the UPRTase family. Mg(2+) is required as a cofactor.

It catalyses the reaction UMP + diphosphate = 5-phospho-alpha-D-ribose 1-diphosphate + uracil. It participates in pyrimidine metabolism; UMP biosynthesis via salvage pathway; UMP from uracil: step 1/1. With respect to regulation, allosterically activated by GTP. Catalyzes the conversion of uracil and 5-phospho-alpha-D-ribose 1-diphosphate (PRPP) to UMP and diphosphate. This chain is Uracil phosphoribosyltransferase 2, found in Schizosaccharomyces pombe (strain 972 / ATCC 24843) (Fission yeast).